The chain runs to 86 residues: Trypsin inhibitor (86 aa).

2 cysteine pairs are disulfide-bonded: Cys-8/Cys-65 and Cys-49/Cys-58.

In terms of biological role, serine protease inhibitor which is active against trypsin. Displays strong antifungal activity against a number of phytopathogenic fungi including M.melonis, A.cucumerina, A.solani, C.glaeosporioides and P.capsici. In Fagopyrum tataricum (Tartarian buckwheat), this protein is Trypsin inhibitor.